A 147-amino-acid chain; its full sequence is Large ribosomal subunit protein bL21 (147 aa).

A disordered region spans residues 125–147 (EEVEAAPKAKKAAPKAKKEATKE).

It belongs to the bacterial ribosomal protein bL21 family. Part of the 50S ribosomal subunit. Contacts protein L20.

Its function is as follows. This protein binds to 23S rRNA in the presence of protein L20. The sequence is that of Large ribosomal subunit protein bL21 from Flavobacterium johnsoniae (strain ATCC 17061 / DSM 2064 / JCM 8514 / BCRC 14874 / CCUG 350202 / NBRC 14942 / NCIMB 11054 / UW101) (Cytophaga johnsonae).